We begin with the raw amino-acid sequence, 582 residues long: Inactive metallocarboxypeptidase ECM14 (582 aa).

Residues 1–20 (MHILQVITGATLVSVPFVSA) form the signal peptide. The propeptide occupies 21–172 (IPSSTSEFLP…QAVYESYPQP (152 aa)). The 323-residue stretch at 200 to 522 (DYQPLSVIIP…NAVLVFGQFL (323 aa)) folds into the Peptidase M14 domain. Positions 265 and 268 each coordinate Zn(2+). Residues 265–268 (HARE), Arg323, and 340–341 (DR) each bind substrate. Cysteines 334 and 357 form a disulfide. Residues Asn381 and Asn387 are each glycosylated (N-linked (GlcNAc...) asparagine). Position 397 (His397) interacts with Zn(2+). Substrate is bound at residue 398–399 (SY). Residues 561-571 (SNQLEDDDNEN) are compositionally biased toward acidic residues. The tract at residues 561 to 582 (SNQLEDDDNENDTLLGFRTQKV) is disordered. Asn571 carries an N-linked (GlcNAc...) asparagine glycan.

The protein belongs to the peptidase M14 family. Requires Zn(2+) as cofactor.

Its subcellular location is the vacuole. It is found in the secreted. Inactive carboxypeptidase that may play a role in cell wall organization and biogenesis. This is Inactive metallocarboxypeptidase ECM14 (ECM14) from Coccidioides posadasii (strain C735) (Valley fever fungus).